A 589-amino-acid polypeptide reads, in one-letter code: Aspartate--tRNA(Asp/Asn) ligase (589 aa).

Glutamate 170 contributes to the L-aspartate binding site. The segment at 194–197 is aspartate; sequence QLFK. Arginine 216 provides a ligand contact to L-aspartate. ATP-binding positions include 216–218 and glutamine 225; that span reads RDE. Histidine 448 contributes to the L-aspartate binding site. ATP is bound at residue glutamate 482. Arginine 489 is a binding site for L-aspartate. An ATP-binding site is contributed by 534–537; the sequence is GWDR. A disordered region spans residues 563–589; that stretch reads PLTDAPASITAQQRKESGIDTKPKEVE. The segment covering 575–589 has biased composition (basic and acidic residues); sequence QRKESGIDTKPKEVE.

Belongs to the class-II aminoacyl-tRNA synthetase family. Type 1 subfamily. Homodimer.

It localises to the cytoplasm. It carries out the reaction tRNA(Asx) + L-aspartate + ATP = L-aspartyl-tRNA(Asx) + AMP + diphosphate. Aspartyl-tRNA synthetase with relaxed tRNA specificity since it is able to aspartylate not only its cognate tRNA(Asp) but also tRNA(Asn). Reaction proceeds in two steps: L-aspartate is first activated by ATP to form Asp-AMP and then transferred to the acceptor end of tRNA(Asp/Asn). The chain is Aspartate--tRNA(Asp/Asn) ligase from Mycobacterium leprae (strain Br4923).